The sequence spans 81 residues: Photosystem I iron-sulfur center (81 aa).

2 4Fe-4S ferredoxin-type domains span residues 2–31 (SHSV…MVPW) and 39–68 (IAAS…IRVY). Positions 11, 14, 17, 21, 48, 51, 54, and 58 each coordinate [4Fe-4S] cluster.

The cyanobacterial PSI reaction center is composed of one copy each of PsaA,B,C,D,E,F,I,J,K,L,M and X, and forms trimeric complexes. [4Fe-4S] cluster is required as a cofactor.

The protein resides in the cellular thylakoid membrane. It catalyses the reaction reduced [plastocyanin] + hnu + oxidized [2Fe-2S]-[ferredoxin] = oxidized [plastocyanin] + reduced [2Fe-2S]-[ferredoxin]. In terms of biological role, apoprotein for the two 4Fe-4S centers FA and FB of photosystem I (PSI); essential for photochemical activity. FB is the terminal electron acceptor of PSI, donating electrons to ferredoxin. The C-terminus interacts with PsaA/B/D and helps assemble the protein into the PSI complex. Required for binding of PsaD and PsaE to PSI. PSI is a plastocyanin/cytochrome c6-ferredoxin oxidoreductase, converting photonic excitation into a charge separation, which transfers an electron from the donor P700 chlorophyll pair to the spectroscopically characterized acceptors A0, A1, FX, FA and FB in turn. This chain is Photosystem I iron-sulfur center, found in Synechococcus elongatus (strain ATCC 33912 / PCC 7942 / FACHB-805) (Anacystis nidulans R2).